An 883-amino-acid polypeptide reads, in one-letter code: Alanine--tRNA ligase (883 aa).

His560, His564, Cys665, and His669 together coordinate Zn(2+).

It belongs to the class-II aminoacyl-tRNA synthetase family. Requires Zn(2+) as cofactor.

It localises to the cytoplasm. The catalysed reaction is tRNA(Ala) + L-alanine + ATP = L-alanyl-tRNA(Ala) + AMP + diphosphate. Functionally, catalyzes the attachment of alanine to tRNA(Ala) in a two-step reaction: alanine is first activated by ATP to form Ala-AMP and then transferred to the acceptor end of tRNA(Ala). Also edits incorrectly charged Ser-tRNA(Ala) and Gly-tRNA(Ala) via its editing domain. This is Alanine--tRNA ligase from Mesomycoplasma hyopneumoniae (strain 7448) (Mycoplasma hyopneumoniae).